A 280-amino-acid chain; its full sequence is 4-diphosphocytidyl-2-C-methyl-D-erythritol kinase (280 aa).

Lys-9 is a catalytic residue. 92-102 (PMGGGLGGGSS) is a binding site for ATP. The active site involves Asp-134.

The protein belongs to the GHMP kinase family. IspE subfamily.

The enzyme catalyses 4-CDP-2-C-methyl-D-erythritol + ATP = 4-CDP-2-C-methyl-D-erythritol 2-phosphate + ADP + H(+). It participates in isoprenoid biosynthesis; isopentenyl diphosphate biosynthesis via DXP pathway; isopentenyl diphosphate from 1-deoxy-D-xylulose 5-phosphate: step 3/6. In terms of biological role, catalyzes the phosphorylation of the position 2 hydroxy group of 4-diphosphocytidyl-2C-methyl-D-erythritol. This chain is 4-diphosphocytidyl-2-C-methyl-D-erythritol kinase, found in Nitrosococcus oceani (strain ATCC 19707 / BCRC 17464 / JCM 30415 / NCIMB 11848 / C-107).